Here is a 362-residue protein sequence, read N- to C-terminus: Mitochondrial glycine transporter (362 aa).

3 Solcar repeats span residues 22-108 (PDAT…MRTS), 132-236 (LTAM…FKND), and 269-354 (RSSI…LIKS). Transmembrane regions (helical) follow at residues 28–53 (LLAG…TRLQ), 83–109 (GTLP…RTSW), 138–163 (LTTG…TRFE), 211–234 (GSVA…EAFK), 273–299 (INST…KTRL), and 329–347 (GLSL…SWCI).

It belongs to the mitochondrial carrier (TC 2.A.29) family. SLC25A38 subfamily.

The protein localises to the mitochondrion inner membrane. It carries out the reaction glycine(in) = glycine(out). Its function is as follows. Mitochondrial glycine transporter that imports glycine into the mitochondrial matrix. Plays an important role in providing glycine for the first enzymatic step in heme biosynthesis, the condensation of glycine with succinyl-CoA to produce 5-aminolevulinate (ALA) in the mitochondrial matrix. In Candida albicans (strain SC5314 / ATCC MYA-2876) (Yeast), this protein is Mitochondrial glycine transporter.